The primary structure comprises 118 residues: Small ribosomal subunit protein uS13 (118 aa).

The tract at residues 94–118 is disordered; that stretch reads GLPVRGQRTKTNARTRKGPRKPIKK.

Belongs to the universal ribosomal protein uS13 family. Part of the 30S ribosomal subunit. Forms a loose heterodimer with protein S19. Forms two bridges to the 50S subunit in the 70S ribosome.

Functionally, located at the top of the head of the 30S subunit, it contacts several helices of the 16S rRNA. In the 70S ribosome it contacts the 23S rRNA (bridge B1a) and protein L5 of the 50S subunit (bridge B1b), connecting the 2 subunits; these bridges are implicated in subunit movement. Contacts the tRNAs in the A and P-sites. This chain is Small ribosomal subunit protein uS13, found in Shigella dysenteriae serotype 1 (strain Sd197).